Consider the following 466-residue polypeptide: Asparagine--tRNA ligase (466 aa).

Belongs to the class-II aminoacyl-tRNA synthetase family. Homodimer.

The protein resides in the cytoplasm. The enzyme catalyses tRNA(Asn) + L-asparagine + ATP = L-asparaginyl-tRNA(Asn) + AMP + diphosphate + H(+). This chain is Asparagine--tRNA ligase, found in Salmonella typhimurium (strain LT2 / SGSC1412 / ATCC 700720).